The sequence spans 804 residues: Probable replication endonuclease from prophage-like region 1 (804 aa).

Active-site O-(5'-phospho-DNA)-tyrosine intermediate residues include tyrosine 498 and tyrosine 502.

This sequence belongs to the phage GPA family.

Its function is as follows. Possible endonuclease which induces a single-strand cut and initiates DNA replication. The sequence is that of Probable replication endonuclease from prophage-like region 1 from Salmonella typhi.